Here is a 2167-residue protein sequence, read N- to C-terminus: SH3 and multiple ankyrin repeat domains protein 1 (2167 aa).

Residues 1-63 form a disordered region; that stretch reads MTHSPATSED…TRGLQGRSMS (63 aa). Residues 17–32 show a composition bias toward low complexity; that stretch reads SECPEGGSESDSSPDG. Gly residues predominate over residues 33–47; sequence PGRGPQGTRGRGSGA. R43 carries the post-translational modification Omega-N-methylarginine. Y186 bears the Phosphotyrosine mark. ANK repeat units follow at residues 195 to 210, 212 to 245, 246 to 278, 279 to 312, 313 to 345, 346 to 378, and 379 to 395; these read VARL…YHDS, SGET…FRAR, DGMT…YKDR, RGLT…IADE, NGWQ…AQNA, SGNT…VKNN, and NGQT…NFEL. 2 disordered regions span residues 413–432 and 453–546; these read SPKY…TVPP and APGA…SRGR. Residues 453 to 479 show a composition bias toward low complexity; sequence APGASSSGTPGPTSGPQGQSQPSAPST. Gly residues predominate over residues 527–542; that stretch reads PAGGTGGSGGPGGSLG. S540 is modified (phosphoserine). R544 bears the Omega-N-methylarginine mark. The region spanning 554–613 is the SH3 domain; sequence VPGRSFMAVKSYQAQGEGEISLSKGEKIKVLSIGEGGFWEGQVKGRVGWFPSDCLEEVAN. Phosphoserine is present on residues S638, S641, S671, and S791. The PDZ domain maps to 663–757; that stretch reads TVLLQKKDSE…TLMVKVVMVT (95 aa). The disordered stretch occupies residues 841–894; it reads ISASESPGPGGLASLGKHRPKGFFATESSFDPHHRSQPSYDRPSFLPPGPGLML. Residue S898 is modified to Phosphoserine. Disordered regions lie at residues 917–1233, 1245–1294, 1308–1417, 1429–1725, 1740–1787, 1842–1866, 1898–1988, and 2002–2029; these read SRSL…LDFT, RREG…SIDE, GGSS…VLRL, RAGL…AGVA, GQAF…DPVT, KLLP…QPQA, PWAR…STRH, and RRAP…LPIL. Positions 928–947 are enriched in pro residues; sequence IPPPPTTSPPEPPYSTPPAP. R958 carries the omega-N-methylarginine modification. The span at 964–980 shows a compositional bias: low complexity; the sequence is PSSGGPLPASSPSSFDG. The span at 1004 to 1028 shows a compositional bias: basic residues; it reads AHHHPPHHHHHHAPPPQPHHHHAHP. R1059 carries the post-translational modification Omega-N-methylarginine. Positions 1064–1085 are enriched in low complexity; it reads SPTSGAPSPSHHSSSGGSSGPT. 2 positions are modified to omega-N-methylarginine: R1098 and R1109. 2 stretches are compositionally biased toward low complexity: residues 1132–1146 and 1171–1184; these read SIPS…ALPR and STSS…GSST. The segment covering 1203 to 1224 has biased composition (pro residues); sequence SPAPATSPVPPSPSPVPTPASP. A compositionally biased stretch (basic and acidic residues) spans 1245-1256; sequence RREGGWQNEARR. Residue R1257 is modified to Asymmetric dimethylarginine. At S1291 the chain carries Phosphoserine. Positions 1363–1372 are enriched in basic and acidic residues; that stretch reads ARERALKESS. A compositionally biased stretch (pro residues) spans 1378 to 1395; sequence PQPPPRPPSPRYDAPPPT. Positions 1396 to 1408 are enriched in basic residues; that stretch reads LHHHSPHSPHSPH. Position 1429 is an omega-N-methylarginine (R1429). S1442 is subject to Phosphoserine. Composition is skewed to low complexity over residues 1459-1469 and 1530-1541; these read PGVGPLLLQLG and RRVLPTSPTSPR. The segment covering 1589 to 1615 has biased composition (pro residues); it reads PLTPGPPHPLPDPPSPATPLPAAPPPA. The segment covering 1624-1641 has biased composition (polar residues); that stretch reads DSTASSLTSYDSEVATLT. A compositionally biased stretch (pro residues) spans 1648–1676; it reads PGDPPAPGPPAPAAPAPPAPQPGPDPPPG. The segment covering 1684–1694 has biased composition (basic and acidic residues); that stretch reads VDSRSSSDHPL. A compositionally biased stretch (low complexity) spans 1695-1708; sequence ETISSASTLSSLSA. The span at 1709 to 1724 shows a compositional bias: gly residues; it reads EGGGNTGGVAGGGAGV. The segment covering 1850–1861 has biased composition (pro residues); that stretch reads PGPPPPPLPGPL. R1901 is modified (omega-N-methylarginine). Low complexity-rich tracts occupy residues 1934–1945, 1960–1985, and 2002–2012; these read SQTSLLSKPSSS, TGSG…ASAS, and RRAPSPSLLPA. Omega-N-methylarginine is present on residues R2022, R2042, and R2080. One can recognise an SAM domain in the interval 2104–2167; that stretch reads WTKFDVADWL…DRALKFFLER (64 aa).

This sequence belongs to the SHANK family. May homomultimerize via its SAM domain. Interacts with the C-terminus of SSTR2 via the PDZ domain. Interacts with SHARPIN, SPTAN1 and DLGAP1/GKAP. Part of a complex with DLG4/PSD-95 and DLGAP1/GKAP. Interacts with BAIAP2. Interacts with IGSF9. Interacts with HOMER1 and HOMER3. In terms of tissue distribution, expressed only in brain (neuropil of cortex, CA1 region hippocampus and molecular layer of cerebellum).

It localises to the cytoplasm. The protein resides in the synapse. Its subcellular location is the postsynaptic density. Its function is as follows. Seems to be an adapter protein in the postsynaptic density (PSD) of excitatory synapses that interconnects receptors of the postsynaptic membrane including NMDA-type and metabotropic glutamate receptors, and the actin-based cytoskeleton. Plays a role in the structural and functional organization of the dendritic spine and synaptic junction. Overexpression promotes maturation of dendritic spines and the enlargement of spine heads via its ability to recruit Homer to postsynaptic sites, and enhances presynaptic function. The chain is SH3 and multiple ankyrin repeat domains protein 1 (Shank1) from Rattus norvegicus (Rat).